Here is a 178-residue protein sequence, read N- to C-terminus: Large ribosomal subunit protein uL6 (178 aa).

The protein belongs to the universal ribosomal protein uL6 family. In terms of assembly, part of the 50S ribosomal subunit.

This protein binds to the 23S rRNA, and is important in its secondary structure. It is located near the subunit interface in the base of the L7/L12 stalk, and near the tRNA binding site of the peptidyltransferase center. This chain is Large ribosomal subunit protein uL6, found in Coxiella burnetii (strain CbuK_Q154) (Coxiella burnetii (strain Q154)).